The sequence spans 643 residues: Threonine--tRNA ligase (643 aa).

The region spanning 1 to 61 (MPIITLPDGS…EQDATLEIIT (61 aa)) is the TGS domain. A catalytic region spans residues 243-534 (DHRKIGKALD…ITEEYAGFFP (292 aa)). Zn(2+)-binding residues include C334, H385, and H511.

Belongs to the class-II aminoacyl-tRNA synthetase family. In terms of assembly, homodimer. Requires Zn(2+) as cofactor.

It is found in the cytoplasm. It catalyses the reaction tRNA(Thr) + L-threonine + ATP = L-threonyl-tRNA(Thr) + AMP + diphosphate + H(+). Its function is as follows. Catalyzes the attachment of threonine to tRNA(Thr) in a two-step reaction: L-threonine is first activated by ATP to form Thr-AMP and then transferred to the acceptor end of tRNA(Thr). Also edits incorrectly charged L-seryl-tRNA(Thr). This Haemophilus influenzae (strain PittGG) protein is Threonine--tRNA ligase.